A 262-amino-acid chain; its full sequence is Nitrate transport protein NasD (262 aa).

An ABC transporter domain is found at 5–239 (IQVQGVSQRF…RPRNRVQLAD (235 aa)). Residue 41–48 (GHSGCGKS) coordinates ATP.

It belongs to the ABC transporter superfamily.

It localises to the cell membrane. In terms of biological role, probably part of a high-affinity binding-protein-dependent transport system for nitrate. Probably responsible for energy coupling to the transport system. The polypeptide is Nitrate transport protein NasD (nasD) (Klebsiella oxytoca).